The sequence spans 542 residues: Cytochrome P450 734A6 (542 aa).

The chain crosses the membrane as a helical span at residues 2-22 (GWWGWAAAAAAAAAWVAVKVL). Residue cysteine 474 participates in heme binding.

Belongs to the cytochrome P450 family. Heme is required as a cofactor. As to expression, highly expressed in leaf sheaths. Expressed in roots, shoot apex, leaf blades, internodes and panicles.

The protein resides in the membrane. Cytochrome P450 involved in brassinosteroids (BRs) inactivation and regulation of BRs homeostasis. Is a multifunctional and multisubstrate enzyme that controls the endogenous bioactive BR content both by direct inactivation of castasterone (CS) and by decreasing the levels of BR precursors. Catalyzes the oxidation of carbon 22 hydroxylated BR intermediates to produce C26 oxidized metabolites. The chain is Cytochrome P450 734A6 (CYP734A6) from Oryza sativa subsp. japonica (Rice).